Reading from the N-terminus, the 49-residue chain is uncharacterized protein (49 aa).

The interval 1–49 (MSNETFEQNEPKPTKVEELQPGDVEAVEDSTPVREITQTDHINKAMLQI) is disordered. Positions 9–18 (NEPKPTKVEE) are enriched in basic and acidic residues.

This is an uncharacterized protein from Dictyostelium discoideum (Social amoeba).